The sequence spans 87 residues: Small ribosomal subunit protein bS20 (87 aa).

Positions 1–22 (MANIKSQIKRIGTNKKAQERNK) are disordered.

The protein belongs to the bacterial ribosomal protein bS20 family.

Its function is as follows. Binds directly to 16S ribosomal RNA. This chain is Small ribosomal subunit protein bS20, found in Clavibacter sepedonicus (Clavibacter michiganensis subsp. sepedonicus).